Here is a 142-residue protein sequence, read N- to C-terminus: Hemoglobin subunit alpha-1 (142 aa).

The region spanning 2-142 is the Globin domain; the sequence is VLSADDKSNV…VSTVLTSKYR (141 aa). Position 59 (H59) interacts with O2. H88 serves as a coordination point for heme b.

The protein belongs to the globin family. As to quaternary structure, heterotetramer of two alpha chains and two beta chains. As to expression, red blood cells.

In terms of biological role, involved in oxygen transport from the lung to the various peripheral tissues. Its function is as follows. Hemopressin acts as an antagonist peptide of the cannabinoid receptor CNR1. Hemopressin-binding efficiently blocks cannabinoid receptor CNR1 and subsequent signaling. This chain is Hemoglobin subunit alpha-1 (HBA1), found in Equus quagga burchellii (Burchell's zebra).